An 804-amino-acid chain; its full sequence is Enhancer of polycomb homolog 2 (804 aa).

Disordered regions lie at residues 372–395 (QSSD…ENDP), 484–508 (GFSS…DRHC), 603–624 (QSQQ…SDCM), and 646–669 (PVRS…VQPS). Composition is skewed to polar residues over residues 611-624 (SHPK…SDCM) and 654-669 (DQNA…VQPS).

This sequence belongs to the enhancer of polycomb family.

The protein resides in the nucleus. May play a role in transcription or DNA repair. The polypeptide is Enhancer of polycomb homolog 2 (epc2) (Xenopus laevis (African clawed frog)).